Reading from the N-terminus, the 158-residue chain is NAD(P)H-quinone oxidoreductase subunit J, chloroplastic (158 aa).

Belongs to the complex I 30 kDa subunit family. NDH is composed of at least 16 different subunits, 5 of which are encoded in the nucleus.

The protein resides in the plastid. Its subcellular location is the chloroplast thylakoid membrane. It carries out the reaction a plastoquinone + NADH + (n+1) H(+)(in) = a plastoquinol + NAD(+) + n H(+)(out). The enzyme catalyses a plastoquinone + NADPH + (n+1) H(+)(in) = a plastoquinol + NADP(+) + n H(+)(out). Functionally, NDH shuttles electrons from NAD(P)H:plastoquinone, via FMN and iron-sulfur (Fe-S) centers, to quinones in the photosynthetic chain and possibly in a chloroplast respiratory chain. The immediate electron acceptor for the enzyme in this species is believed to be plastoquinone. Couples the redox reaction to proton translocation, and thus conserves the redox energy in a proton gradient. In Cicer arietinum (Chickpea), this protein is NAD(P)H-quinone oxidoreductase subunit J, chloroplastic.